The sequence spans 1598 residues: Pentafunctional AROM polypeptide (1598 aa).

The interval 1-384 (MGVPTKISIL…YEPRACTVSN (384 aa)) is 3-dehydroquinate synthase. Residues 44–46 (DTN), 81–84 (ESSK), 114–116 (GGV), and aspartate 119 contribute to the NAD(+) site. Arginine 130 is a 7-phospho-2-dehydro-3-deoxy-D-arabino-heptonate binding site. 139-140 (TT) is an NAD(+) binding site. 7-phospho-2-dehydro-3-deoxy-D-arabino-heptonate is bound by residues aspartate 146 and lysine 152. Residue lysine 161 participates in NAD(+) binding. Residue asparagine 162 participates in 7-phospho-2-dehydro-3-deoxy-D-arabino-heptonate binding. NAD(+) is bound by residues 179-182 (FLNT) and asparagine 190. Residue glutamate 194 coordinates Zn(2+). Residues 194–197 (EVIK) and lysine 250 contribute to the 7-phospho-2-dehydro-3-deoxy-D-arabino-heptonate site. The Proton acceptor; for 3-dehydroquinate synthase activity role is filled by glutamate 260. Residues 264–268 (RNLLN) and histidine 271 each bind 7-phospho-2-dehydro-3-deoxy-D-arabino-heptonate. Histidine 271 contributes to the Zn(2+) binding site. Residue histidine 275 is the Proton acceptor; for 3-dehydroquinate synthase activity of the active site. Histidine 287 and lysine 356 together coordinate 7-phospho-2-dehydro-3-deoxy-D-arabino-heptonate. Residue histidine 287 participates in Zn(2+) binding. The EPSP synthase stretch occupies residues 397-842 (VYPGFPKSLN…WDTLAQTFKV (446 aa)). Catalysis depends on cysteine 824, which acts as the For EPSP synthase activity. A shikimate kinase region spans residues 867–1059 (AASIFIIGMR…RRKENTFFVS (193 aa)). 874–881 (GMRGAGKT) is an ATP binding site. The 3-dehydroquinase stretch occupies residues 1060 to 1280 (LTFPDLTPAS…AAPGQLSARE (221 aa)). Histidine 1183 serves as the catalytic Proton acceptor; for 3-dehydroquinate dehydratase activity. The active-site Schiff-base intermediate with substrate; for 3-dehydroquinate dehydratase activity is lysine 1211. A shikimate dehydrogenase region spans residues 1293–1598 (AKKFAVIGKP…GVSSSDDIIS (306 aa)).

This sequence in the N-terminal section; belongs to the sugar phosphate cyclases superfamily. Dehydroquinate synthase family. It in the 2nd section; belongs to the EPSP synthase family. In the 3rd section; belongs to the shikimate kinase family. The protein in the 4th section; belongs to the type-I 3-dehydroquinase family. This sequence in the C-terminal section; belongs to the shikimate dehydrogenase family. As to quaternary structure, homodimer. Requires Zn(2+) as cofactor.

Its subcellular location is the cytoplasm. It carries out the reaction 7-phospho-2-dehydro-3-deoxy-D-arabino-heptonate = 3-dehydroquinate + phosphate. The catalysed reaction is 3-dehydroquinate = 3-dehydroshikimate + H2O. It catalyses the reaction shikimate + NADP(+) = 3-dehydroshikimate + NADPH + H(+). The enzyme catalyses shikimate + ATP = 3-phosphoshikimate + ADP + H(+). It carries out the reaction 3-phosphoshikimate + phosphoenolpyruvate = 5-O-(1-carboxyvinyl)-3-phosphoshikimate + phosphate. It participates in metabolic intermediate biosynthesis; chorismate biosynthesis; chorismate from D-erythrose 4-phosphate and phosphoenolpyruvate: step 2/7. Its pathway is metabolic intermediate biosynthesis; chorismate biosynthesis; chorismate from D-erythrose 4-phosphate and phosphoenolpyruvate: step 3/7. The protein operates within metabolic intermediate biosynthesis; chorismate biosynthesis; chorismate from D-erythrose 4-phosphate and phosphoenolpyruvate: step 4/7. It functions in the pathway metabolic intermediate biosynthesis; chorismate biosynthesis; chorismate from D-erythrose 4-phosphate and phosphoenolpyruvate: step 5/7. It participates in metabolic intermediate biosynthesis; chorismate biosynthesis; chorismate from D-erythrose 4-phosphate and phosphoenolpyruvate: step 6/7. Functionally, the AROM polypeptide catalyzes 5 consecutive enzymatic reactions in prechorismate polyaromatic amino acid biosynthesis. This is Pentafunctional AROM polypeptide from Paracoccidioides lutzii (strain ATCC MYA-826 / Pb01) (Paracoccidioides brasiliensis).